Consider the following 222-residue polypeptide: ATP-dependent dethiobiotin synthetase BioD (222 aa).

Residue 12-17 (DVGKTF) coordinates ATP. Thr-16 is a binding site for Mg(2+). Residue Lys-37 is part of the active site. Residue Ser-41 coordinates substrate. Residues Asp-54 and 113–116 (EGAG) each bind ATP. Mg(2+)-binding residues include Asp-54 and Glu-113.

The protein belongs to the dethiobiotin synthetase family. In terms of assembly, homodimer. Mg(2+) is required as a cofactor.

It is found in the cytoplasm. The catalysed reaction is (7R,8S)-7,8-diammoniononanoate + CO2 + ATP = (4R,5S)-dethiobiotin + ADP + phosphate + 3 H(+). The protein operates within cofactor biosynthesis; biotin biosynthesis; biotin from 7,8-diaminononanoate: step 1/2. In terms of biological role, catalyzes a mechanistically unusual reaction, the ATP-dependent insertion of CO2 between the N7 and N8 nitrogen atoms of 7,8-diaminopelargonic acid (DAPA, also called 7,8-diammoniononanoate) to form a ureido ring. The protein is ATP-dependent dethiobiotin synthetase BioD of Anoxybacillus flavithermus (strain DSM 21510 / WK1).